The following is a 205-amino-acid chain: uncharacterized protein (205 aa).

Residues 1 to 82 (MIKVYGVPGW…MVLDRRPDLA (82 aa)) enclose the GST N-terminal domain. Residues V53 and 66-67 (ET) each bind glutathione. The 120-residue stretch at 86-205 (GRAERQLFQR…QEVLKRNEII (120 aa)) folds into the GST C-terminal domain.

The protein belongs to the GST superfamily. Beta family.

This is an uncharacterized protein from Escherichia coli (strain K12).